Reading from the N-terminus, the 287-residue chain is Bifunctional protein FolD (287 aa).

NADP(+) is bound by residues 169-171 (GRS) and Ser-194.

This sequence belongs to the tetrahydrofolate dehydrogenase/cyclohydrolase family. Homodimer.

The catalysed reaction is (6R)-5,10-methylene-5,6,7,8-tetrahydrofolate + NADP(+) = (6R)-5,10-methenyltetrahydrofolate + NADPH. It carries out the reaction (6R)-5,10-methenyltetrahydrofolate + H2O = (6R)-10-formyltetrahydrofolate + H(+). Its pathway is one-carbon metabolism; tetrahydrofolate interconversion. In terms of biological role, catalyzes the oxidation of 5,10-methylenetetrahydrofolate to 5,10-methenyltetrahydrofolate and then the hydrolysis of 5,10-methenyltetrahydrofolate to 10-formyltetrahydrofolate. The chain is Bifunctional protein FolD from Albidiferax ferrireducens (strain ATCC BAA-621 / DSM 15236 / T118) (Rhodoferax ferrireducens).